The chain runs to 443 residues: Glutamate--tRNA ligase 1 (443 aa).

The short motif at 7–17 (PSPTGYLHVGN) is the 'HIGH' region element. Residues 236 to 240 (KISKR) carry the 'KMSKS' region motif. ATP is bound at residue Lys239.

The protein belongs to the class-I aminoacyl-tRNA synthetase family. Glutamate--tRNA ligase type 1 subfamily. Monomer.

The protein localises to the cytoplasm. It catalyses the reaction tRNA(Glu) + L-glutamate + ATP = L-glutamyl-tRNA(Glu) + AMP + diphosphate. In terms of biological role, catalyzes the attachment of glutamate to tRNA(Glu) in a two-step reaction: glutamate is first activated by ATP to form Glu-AMP and then transferred to the acceptor end of tRNA(Glu). The chain is Glutamate--tRNA ligase 1 from Ehrlichia chaffeensis (strain ATCC CRL-10679 / Arkansas).